We begin with the raw amino-acid sequence, 38 residues long: Photosystem II reaction center protein L (38 aa).

Residues S17–F37 traverse the membrane as a helical segment.

The protein belongs to the PsbL family. As to quaternary structure, PSII is composed of 1 copy each of membrane proteins PsbA, PsbB, PsbC, PsbD, PsbE, PsbF, PsbH, PsbI, PsbJ, PsbK, PsbL, PsbM, PsbT, PsbX, PsbY, PsbZ, Psb30/Ycf12, at least 3 peripheral proteins of the oxygen-evolving complex and a large number of cofactors. It forms dimeric complexes.

It localises to the plastid. Its subcellular location is the chloroplast thylakoid membrane. Its function is as follows. One of the components of the core complex of photosystem II (PSII). PSII is a light-driven water:plastoquinone oxidoreductase that uses light energy to abstract electrons from H(2)O, generating O(2) and a proton gradient subsequently used for ATP formation. It consists of a core antenna complex that captures photons, and an electron transfer chain that converts photonic excitation into a charge separation. This subunit is found at the monomer-monomer interface and is required for correct PSII assembly and/or dimerization. This is Photosystem II reaction center protein L from Emiliania huxleyi (Coccolithophore).